Consider the following 406-residue polypeptide: Gustatory receptor for sugar taste 64b (406 aa).

Topologically, residues 1–47 (MPQGETFHRAVSNVLFISQIYGLLPVSNVRALDVADIRFRWCSPRIL) are cytoplasmic. The chain crosses the membrane as a helical span at residues 48–68 (YSLLIGILNLSEFGAVINYVI). Topologically, residues 69-79 (KVTINFHTSST) are extracellular. A helical membrane pass occupies residues 80–100 (LSLYIVCLLEHLFFWRLAIQW). The Cytoplasmic segment spans residues 101-130 (PRIMRTWHGVEQLFLRVPYRFYGEYRIKRR). The helical transmembrane segment at 131-151 (IYIVFTIVMSSALVEHCLLLG) threads the bilayer. Residues 152-183 (NSFHLSNMERTQCKINVTYFESIYKWERPHLY) are Extracellular-facing. The N-linked (GlcNAc...) asparagine glycan is linked to Asn-167. Residues 184 to 204 (MILPYHFWMLPILEWVNQTIA) traverse the membrane as a helical segment. Residues 205 to 265 (YPRSFTDCFI…KRLVHLLDAA (61 aa)) are Cytoplasmic-facing. A helical transmembrane segment spans residues 266-286 (IAPLVLLAFGNNMSFICFQLF). Residues 287 to 290 (NSFK) are Extracellular-facing. A helical transmembrane segment spans residues 291–311 (NIGVDFLVMLAFWYSLGFAVV). Residues 312–370 (RTLLTIFVASSINDYERKIVTALRDVPSRAWSIEVQRFSEQLGNDTTALSGSGFFYLTR) are Cytoplasmic-facing. Residues 371-391 (SLVLAMGTTIITYELMISDVI) form a helical membrane-spanning segment. Residues 392 to 406 (NQGSIRQKTQYCREY) lie on the Extracellular side of the membrane.

It belongs to the insect chemoreceptor superfamily. Gustatory receptor (GR) family. Gr5a subfamily. As to expression, expressed in Gr5a-expressing sugar-sensing cells.

It localises to the cell membrane. One of the few identified sugar gustatory receptors identified so far and which promotes the starvation-induced increase of feeding motivation. The protein is Gustatory receptor for sugar taste 64b (Gr64b) of Drosophila melanogaster (Fruit fly).